Consider the following 137-residue polypeptide: Transcription antitermination protein NusB (137 aa).

It belongs to the NusB family.

Functionally, involved in transcription antitermination. Required for transcription of ribosomal RNA (rRNA) genes. Binds specifically to the boxA antiterminator sequence of the ribosomal RNA (rrn) operons. This Clavibacter sepedonicus (Clavibacter michiganensis subsp. sepedonicus) protein is Transcription antitermination protein NusB.